The primary structure comprises 924 residues: Intercellular adhesion molecule 5 (924 aa).

An N-terminal signal peptide occupies residues 1 to 31; sequence MPGPSPGLRRALLGLWAALGLGLFGLSAVSQ. The Extracellular portion of the chain corresponds to 32-835; that stretch reads EPFWADLQPR…RITVRVAGPW (804 aa). Ig-like C2-type domains follow at residues 48–130, 135–235, 242–329, 337–402, 408–486, 491–568, 573–662, 666–739, and 746–830; these read GGSL…PLPP, GENF…RLAA, GSER…LLTL, GQMV…SAEL, PRLD…VTLT, PALD…VAVT, PRFE…VVSA, PEMD…RTVT, and PVVA…ITVR. A glycan (N-linked (GlcNAc...) (high mannose) asparagine) is linked at N54. Intrachain disulfides connect C55–C99 and C59–C103. N-linked (GlcNAc...) asparagine glycosylation is found at N74 and N137. C142 and C198 are joined by a disulfide. A phosphothreonine mark is found at T182 and T184. N195 and N214 each carry an N-linked (GlcNAc...) asparagine glycan. A disulfide bond links C249 and C302. N303, N316, N371, and N397 each carry an N-linked (GlcNAc...) asparagine glycan. C344 and C383 are joined by a disulfide. 3 cysteine pairs are disulfide-bonded: C415–C470, C498–C552, and C580–C645. N583 and N646 each carry an N-linked (GlcNAc...) asparagine glycan. Cysteines 673 and 725 form a disulfide. N-linked (GlcNAc...) asparagine glycosylation is found at N764, N795, and N796. A disulfide bridge connects residues C769 and C814. Residues 836 to 856 traverse the membrane as a helical segment; the sequence is LWVAVGGAAGGAALLAAGAGL. At 857-924 the chain is on the cytoplasmic side; the sequence is AFYVQSTACK…EVFAIQLTSA (68 aa). Residues 891–903 are compositionally biased toward gly residues; it reads AGGAAGAEGGPEA. A disordered region spans residues 891 to 911; that stretch reads AGGAAGAEGGPEAAGGAAESP.

Belongs to the immunoglobulin superfamily. ICAM family. Glycosylation at Asn-54 is critical for functional folding. As to expression, expressed on neurons in the most rostral segment of the mammalian brain, the telencephalon.

The protein resides in the membrane. Functionally, ICAM proteins are ligands for the leukocyte adhesion protein LFA-1 (integrin alpha-L/beta-2). This chain is Intercellular adhesion molecule 5 (ICAM5), found in Homo sapiens (Human).